The following is a 128-amino-acid chain: UPF0325 protein PMI2289 (128 aa).

The protein belongs to the UPF0325 family.

This Proteus mirabilis (strain HI4320) protein is UPF0325 protein PMI2289.